Consider the following 1531-residue polypeptide: Slit homolog 1 protein (1531 aa).

An N-terminal signal peptide occupies residues 1-33; it reads MALTPQRGSSSGLSRPELWLLLWAAAWRLGATA. Residues 34-61 form the LRRNT domain; the sequence is CPALCTCTGTTVDCHGTGLQAIPKNIPR. LRR repeat units follow at residues 62 to 83, 86 to 107, 110 to 131, 134 to 155, 158 to 179, and 182 to 203; these read NTERLELNGNNITRIHKNDFAG, QLRVLQLMENQIGAVERGAFDD, ELERLRLNRNQLQVLPELLFQN, ALSRLDLSENSLQAVPRKAFRG, DLKNLQLDKNQISCIEEGAFRA, and GLEVLTLNNNNITTIPVSSFNH. An N-linked (GlcNAc...) asparagine glycan is attached at Asn-72. Asn-192 carries an N-linked (GlcNAc...) asparagine glycan. The LRRCT 1 domain maps to 215–265; it reads NHLFCDCHLAWLSQWLRQRPTIGLFTQCSGPASLRGLNVAEVQKSEFSCSG. The 37-residue stretch at 273–309 folds into the LRRNT 2 domain; the sequence is PACTLSSGSCPAMCSCSNGIVDCRGKGLTAIPANLPE. A disulfide bridge links Cys-286 with Cys-295. LRR repeat units follow at residues 310–331, 334–355, 358–379, 382–403, and 406–427; these read TMTEIRLELNGIKSIPPGAFSP, KLRRIDLSNNQIAEIAPDAFQG, SLNSLVLYGNKITDLPRGVFGG, TLQLLLLNANKINCIRPDAFQD, and NLSLLSLYDNKIQSLAKGTFTS. N-linked (GlcNAc...) asparagine glycosylation occurs at Asn-406. The 51-residue stretch at 439–489 folds into the LRRCT 2 domain; the sequence is NPFICDCNLKWLADFLRTNPIETTGARCASPRRLANKRIGQIKSKKFRCSA. 4 disulfide bridges follow: Cys-443/Cys-466, Cys-445/Cys-487, Cys-513/Cys-519, and Cys-517/Cys-526. Residues 504-540 form the LRRNT 3 domain; the sequence is NSECTSDVACPHKCRCEASVVECSGLKLSKIPERIPQ. 5 LRR repeats span residues 541–562, 566–587, 590–611, 614–635, and 638–659; these read STTELRLNNNEISILEATGLFK, HLKKINLSNNKVSEIEDGTFEG, SVSELHLTANQLESVRSGMFRG, GLRTLMLRNNRISCIHNDSFTG, and NVRLLSLYDNHITTISPGAFDT. N-linked (GlcNAc...) asparagine glycosylation is present at Asn-571. N-linked (GlcNAc...) asparagine glycosylation is present at Asn-630. The 51-residue stretch at 671–721 folds into the LRRCT 3 domain; it reads NPFNCNCQLAWLGDWLRKRKIVTGNPRCQNPDFLRQIPLQDVAFPDFRCEE. Disulfide bonds link Cys-675-Cys-698 and Cys-677-Cys-719. The 37-residue stretch at 725-761 folds into the LRRNT 4 domain; sequence EVGCLPRPQCPQECACLDTVVRCSNKHLQALPKGIPK. Asn-762, Asn-801, and Asn-806 each carry an N-linked (GlcNAc...) asparagine glycan. LRR repeat units follow at residues 762-783, 785-806, 809-830, and 833-854; these read NVTELYLDGNQFTLVPGQLSTF, YLQLVDLSNNKISSLSNSSFTN, QLTTLILSYNALQCIPPLAFQG, and SLRLLSLHGNDVSTLQEGIFAD. One can recognise an LRRCT 4 domain in the interval 866 to 916; sequence NPLYCDCHLRWLSSWVKTGYKEPGIARCAGPPEMEGKLLLTTPAKKFECQG. EGF-like domains are found at residues 927 to 962, 964 to 1003, 1005 to 1041, 1043 to 1081, 1083 to 1119, and 1124 to 1160; these read DPCLSSPCQNQGTCHNDPLEVYRCTCPSGYKGRNCE, SLDSCSSNPCGNGGTCHAQEGEDAGFTCSCPSGFEGLTCG, NTDDCVKHDCVNGGVCVDGIGNYTCQCPLQYTGRACE, LVDFCSPDLNPCQHEAQCVGTPEGPRCECVPGYTGDNCS, NQDDCKDHQCQNGAQCVDEINSYACLCAEGYSGQLCE, and PRNSCEGTECQNGANCVDQGSRPVCQCLPGFGGPECE. 18 disulfide bridges follow: Cys-929/Cys-940, Cys-934/Cys-950, Cys-952/Cys-961, Cys-968/Cys-979, Cys-973/Cys-991, Cys-993/Cys-1002, Cys-1009/Cys-1020, Cys-1014/Cys-1029, Cys-1031/Cys-1040, Cys-1047/Cys-1060, Cys-1054/Cys-1069, Cys-1071/Cys-1080, Cys-1087/Cys-1098, Cys-1092/Cys-1107, Cys-1109/Cys-1118, Cys-1128/Cys-1139, Cys-1133/Cys-1148, and Cys-1150/Cys-1159. N-linked (GlcNAc...) asparagine glycosylation occurs at Asn-1026. A glycan (N-linked (GlcNAc...) asparagine) is linked at Asn-1079. In terms of domain architecture, Laminin G-like spans 1163 to 1336; the sequence is LSVNFVDRDT…QMKPGVVPGC (174 aa). 3 N-linked (GlcNAc...) asparagine glycosylation sites follow: Asn-1186, Asn-1256, and Asn-1303. 14 disulfide bridges follow: Cys-1310–Cys-1336, Cys-1339–Cys-1349, Cys-1344–Cys-1359, Cys-1361–Cys-1370, Cys-1378–Cys-1388, Cys-1383–Cys-1398, Cys-1400–Cys-1409, Cys-1419–Cys-1429, Cys-1424–Cys-1439, Cys-1441–Cys-1450, Cys-1456–Cys-1495, Cys-1474–Cys-1509, Cys-1485–Cys-1525, and Cys-1489–Cys-1527. 3 consecutive EGF-like domains span residues 1337–1371, 1374–1410, and 1415–1451; these read EPCRKLYCLHGICQPNATPGPVCHCEAGWGGLHCD, VDGPCHGHKCVHGKCVPLDALAYSCQCQDGYSGALCN, and VAEPCGGLQCLHGHCQASATRGAHCVCSPGFSGELCE. Positions 1456-1531 constitute a CTCK domain; sequence CRGDPVRDFH…PTKCGCAPCA (76 aa).

As to quaternary structure, interacts with ROBO1 and GREM1. In terms of tissue distribution, in adult brains expressed in the hippocampus, cerebral cortex, and olfactory bulb but not in the cerebellum. In embryo expressed in cerebral cortex.

It is found in the secreted. Thought to act as molecular guidance cue in cellular migration, and function appears to be mediated by interaction with roundabout homolog receptors. During neural development involved in axonal navigation at the ventral midline of the neural tube and projection of axons to different regions. SLIT1 and SLIT2 together seem to be essential for midline guidance in the forebrain by acting as repulsive signal preventing inappropriate midline crossing by axons projecting from the olfactory bulb. The chain is Slit homolog 1 protein (Slit1) from Rattus norvegicus (Rat).